Consider the following 518-residue polypeptide: Membrane-bound lytic murein transglycosylase F (518 aa).

A signal peptide spans 1–21 (MKKLKINYLFIGILALLLAVA). The segment at 22–269 (LWPSIPWFGK…RIEEKYLGHG (248 aa)) is non-LT domain. The LT domain stretch occupies residues 270–518 (DDFDYVDTRT…SRKGSEEKQN (249 aa)). Glu314 is a catalytic residue.

It in the N-terminal section; belongs to the bacterial solute-binding protein 3 family. The protein in the C-terminal section; belongs to the transglycosylase Slt family.

The protein resides in the cell outer membrane. The catalysed reaction is Exolytic cleavage of the (1-&gt;4)-beta-glycosidic linkage between N-acetylmuramic acid (MurNAc) and N-acetylglucosamine (GlcNAc) residues in peptidoglycan, from either the reducing or the non-reducing ends of the peptidoglycan chains, with concomitant formation of a 1,6-anhydrobond in the MurNAc residue.. Functionally, murein-degrading enzyme that degrades murein glycan strands and insoluble, high-molecular weight murein sacculi, with the concomitant formation of a 1,6-anhydromuramoyl product. Lytic transglycosylases (LTs) play an integral role in the metabolism of the peptidoglycan (PG) sacculus. Their lytic action creates space within the PG sacculus to allow for its expansion as well as for the insertion of various structures such as secretion systems and flagella. In Escherichia coli O157:H7, this protein is Membrane-bound lytic murein transglycosylase F.